We begin with the raw amino-acid sequence, 998 residues long: Protein Smaug (998 aa).

Positions Met-1 to Thr-37 are enriched in polar residues. Disordered stretches follow at residues Met-1–Ser-45, Thr-50–Pro-69, and Leu-329–Ser-370. The span at Leu-329–Ser-338 shows a compositional bias: low complexity. Ser-564 and Ser-575 each carry phosphoserine. The tract at residues Glu-583 to Met-763 is interaction with cup. One can recognise an SAM domain in the interval Gly-600 to Lys-654. Disordered stretches follow at residues His-773–Met-892 and Asn-942–Lys-977. Composition is skewed to polar residues over residues Lys-801–Leu-822 and His-854–Pro-864. A Phosphoserine modification is found at Ser-971.

Belongs to the SMAUG family. In terms of assembly, interacts with oskar (osk). Binds to the 3'-UTR of nos. Interacts with cup, which in turn recruits eIF4-E, leading to an indirect interaction between smg and eIF4-E that prevents mRNA translation.

It localises to the cytoplasm. Its function is as follows. Translation regulator that binds to the 3'-UTR of specific mRNAs such as nanos (nos) and prevent their translation. Prevents translation of unlocalized nos in the bulk cytoplasm via the recruitment of cup. This Drosophila simulans (Fruit fly) protein is Protein Smaug.